A 204-amino-acid chain; its full sequence is Leucyl/phenylalanyl-tRNA--protein transferase (204 aa).

It belongs to the L/F-transferase family.

The protein localises to the cytoplasm. The catalysed reaction is N-terminal L-lysyl-[protein] + L-leucyl-tRNA(Leu) = N-terminal L-leucyl-L-lysyl-[protein] + tRNA(Leu) + H(+). It carries out the reaction N-terminal L-arginyl-[protein] + L-leucyl-tRNA(Leu) = N-terminal L-leucyl-L-arginyl-[protein] + tRNA(Leu) + H(+). The enzyme catalyses L-phenylalanyl-tRNA(Phe) + an N-terminal L-alpha-aminoacyl-[protein] = an N-terminal L-phenylalanyl-L-alpha-aminoacyl-[protein] + tRNA(Phe). Functionally, functions in the N-end rule pathway of protein degradation where it conjugates Leu, Phe and, less efficiently, Met from aminoacyl-tRNAs to the N-termini of proteins containing an N-terminal arginine or lysine. The sequence is that of Leucyl/phenylalanyl-tRNA--protein transferase from Sinorhizobium medicae (strain WSM419) (Ensifer medicae).